Here is a 280-residue protein sequence, read N- to C-terminus: Shikimate dehydrogenase (NADP(+)) (280 aa).

Shikimate-binding positions include 18 to 20 and threonine 65; that span reads SRS. Residue lysine 69 is the Proton acceptor of the active site. Shikimate contacts are provided by asparagine 90 and aspartate 105. NADP(+)-binding positions include 130-134, 154-159, and leucine 219; these read GAGGA and NRTLAR. Residue tyrosine 221 coordinates shikimate. An NADP(+)-binding site is contributed by glycine 242.

This sequence belongs to the shikimate dehydrogenase family. In terms of assembly, homodimer.

The enzyme catalyses shikimate + NADP(+) = 3-dehydroshikimate + NADPH + H(+). The protein operates within metabolic intermediate biosynthesis; chorismate biosynthesis; chorismate from D-erythrose 4-phosphate and phosphoenolpyruvate: step 4/7. Involved in the biosynthesis of the chorismate, which leads to the biosynthesis of aromatic amino acids. Catalyzes the reversible NADPH linked reduction of 3-dehydroshikimate (DHSA) to yield shikimate (SA). The chain is Shikimate dehydrogenase (NADP(+)) from Mesorhizobium japonicum (strain LMG 29417 / CECT 9101 / MAFF 303099) (Mesorhizobium loti (strain MAFF 303099)).